Here is a 261-residue protein sequence, read N- to C-terminus: Indole-3-glycerol phosphate synthase (261 aa).

The protein belongs to the TrpC family.

The catalysed reaction is 1-(2-carboxyphenylamino)-1-deoxy-D-ribulose 5-phosphate + H(+) = (1S,2R)-1-C-(indol-3-yl)glycerol 3-phosphate + CO2 + H2O. It participates in amino-acid biosynthesis; L-tryptophan biosynthesis; L-tryptophan from chorismate: step 4/5. The sequence is that of Indole-3-glycerol phosphate synthase from Oceanobacillus iheyensis (strain DSM 14371 / CIP 107618 / JCM 11309 / KCTC 3954 / HTE831).